The primary structure comprises 274 residues: Thiamine kinase (274 aa).

The protein belongs to the thiamine kinase family.

It catalyses the reaction thiamine + ATP = thiamine phosphate + ADP + H(+). The protein operates within cofactor biosynthesis; thiamine diphosphate biosynthesis; thiamine phosphate from thiamine: step 1/1. Functionally, catalyzes the ATP-dependent phosphorylation of thiamine to thiamine phosphate. Is involved in thiamine salvage. The protein is Thiamine kinase of Shigella boydii serotype 4 (strain Sb227).